The primary structure comprises 4151 residues: Mycoketide-CoA synthase (4151 aa).

The stretch at 2-32 forms a coiled coil; the sequence is VDQLQHATEALRKALVQVERLKRTNRALLER. A Ketosynthase family 3 (KS3) 1 domain is found at 34 to 457; sequence SEPIAIVGMS…GTNAHVIIEA (424 aa). Module stretches follow at residues 35–2038 and 2057–4070; these read EPIA…RTEL and DPIA…RREL. Catalysis depends on Cys-203, which acts as the Acyl-thioester intermediate; for beta-ketoacyl synthase 1 activity. Catalysis depends on for beta-ketoacyl synthase 1 activity residues His-338 and His-379. Residues 559 to 880 are acyltransferase 1; that stretch reads VFVFPGQGSQ…AASAFVAGVA (322 aa). Catalysis depends on Ser-650, which acts as the Acyl-ester intermediate; for acyltransferase 1 activity. The segment at 926–1048 is N-terminal hotdog fold 1; it reads HPLLGAVVDL…GILRPGSVEP (123 aa). The segment at 926–1194 is dehydratase 1; the sequence is HPLLGAVVDL…VARPVTERQL (269 aa). Residues 926–1195 enclose the PKS/mFAS DH 1 domain; sequence HPLLGAVVDL…ARPVTERQLL (270 aa). The Proton acceptor; for dehydratase activity 1 role is filled by His-958. The segment at 1060 to 1195 is C-terminal hotdog fold 1; sequence AVTVDVADGY…ARPVTERQLL (136 aa). Catalysis depends on Asp-1120, which acts as the Proton donor; for dehydratase activity 1. The tract at residues 1366 to 1671 is enoyl reductase 1; that stretch reads GTFENLRLEP…QARHTGKVVM (306 aa). The segment at 1680–1858 is beta-ketoacyl reductase 1; it reads GTVLITGGTG…AISLGWGLWD (179 aa). Catalysis depends on Tyr-1828, which acts as the For beta-ketoacyl reductase 1 activity. Residues 1963 to 2038 form the Carrier 1 domain; the sequence is AVLLGLVRLH…RLASYIRTEL (76 aa). Ser-1998 carries the O-(pantetheine 4'-phosphoryl)serine modification. Positions 2056–2480 constitute a Ketosynthase family 3 (KS3) 2 domain; it reads EDPIAIVGMA…GTNAHVIIEA (425 aa). Cys-2226 (acyl-thioester intermediate; for beta-ketoacyl synthase 2 activity) is an active-site residue. Active-site for beta-ketoacyl synthase 2 activity residues include His-2361 and His-2402. An acyltransferase 2 region spans residues 2582 to 2893; it reads VFVFPGQGSQ…AVAQGFVTGM (312 aa). Ser-2672 acts as the Acyl-ester intermediate; for acyltransferase 2 activity in catalysis. An N-terminal hotdog fold 2 region spans residues 2940-3062; that stretch reads HALLGAVIDL…GALRAGSAEP (123 aa). Residues 2940-3215 form a dehydratase 2 region; the sequence is HALLGAVIDL…ARPVTDQQLR (276 aa). Positions 2940 to 3215 constitute a PKS/mFAS DH 2 domain; the sequence is HALLGAVIDL…ARPVTDQQLR (276 aa). His-2972 (proton acceptor; for dehydratase activity 2) is an active-site residue. A C-terminal hotdog fold 2 region spans residues 3074–3215; that stretch reads AVPVEVADGY…ARPVTDQQLR (142 aa). The Proton donor; for dehydratase activity 2 role is filled by Asp-3135. An enoyl reductase 2 region spans residues 3395 to 3701; the sequence is GTFENLRLEL…QARHTGKVVM (307 aa). Positions 3710 to 3888 are beta-ketoacyl reductase 2; it reads GTVLITGGTG…AISLGWGLWD (179 aa). Tyr-3858 functions as the For beta-ketoacyl reductase 2 activity in the catalytic mechanism. Positions 3995–4070 constitute a Carrier 2 domain; the sequence is AVLLDLVRSH…ALAGYMRREL (76 aa). Ser-4030 is modified (O-(pantetheine 4'-phosphoryl)serine).

Forms a large supramolecular assembly mediated through specific interactions between the N- and C-terminus linkers.

The catalysed reaction is a medium-chain fatty acyl-CoA + 5 (S)-methylmalonyl-CoA + 5 malonyl-CoA + 22 NADPH + 32 H(+) = a mycoketide-CoA + 10 CO2 + 22 NADP(+) + 10 CoA + 11 H2O. The protein operates within lipid metabolism; fatty acid metabolism. Involved in the synthesis of beta-D-mannosyl phosphomycoketide (MPM), an antigenic mycobacterial polyketide. Binds a fatty acyl-CoA as a starter unit, and extends it by five rounds of alternative additions of malonyl-CoA and methylmalonyl-CoA extender units. Depending on the starter unit, the enzyme forms mycoketide-CoAs of different lengths. Shows preference for small-/medium-chain starter fatty acyl substrates. Uses a hybrid modularly iterative mechanism, by forming a supramolecular assembly to perform repetitive cycles of iterations. This chain is Mycoketide-CoA synthase, found in Mycobacterium tuberculosis (strain ATCC 25618 / H37Rv).